A 380-amino-acid polypeptide reads, in one-letter code: Cytochrome b (380 aa).

4 consecutive transmembrane segments (helical) span residues 34–54, 78–99, 114–134, and 179–199; these read FGSL…LLAM, WLIR…FLHI, WNTG…GYVL, and FFAL…VHLT. Positions 84 and 98 each coordinate heme b. 2 residues coordinate heme b: His-183 and His-197. His-202 is a binding site for a ubiquinone. 4 consecutive transmembrane segments (helical) span residues 227-247, 289-309, 321-341, and 348-368; these read LKDI…ALFS, LGGV…PFLH, LSQT…WIGS, and FMII…ILFP.

It belongs to the cytochrome b family. In terms of assembly, the cytochrome bc1 complex contains 11 subunits: 3 respiratory subunits (MT-CYB, CYC1 and UQCRFS1), 2 core proteins (UQCRC1 and UQCRC2) and 6 low-molecular weight proteins (UQCRH/QCR6, UQCRB/QCR7, UQCRQ/QCR8, UQCR10/QCR9, UQCR11/QCR10 and a cleavage product of UQCRFS1). This cytochrome bc1 complex then forms a dimer. The cofactor is heme b.

The protein localises to the mitochondrion inner membrane. Component of the ubiquinol-cytochrome c reductase complex (complex III or cytochrome b-c1 complex) that is part of the mitochondrial respiratory chain. The b-c1 complex mediates electron transfer from ubiquinol to cytochrome c. Contributes to the generation of a proton gradient across the mitochondrial membrane that is then used for ATP synthesis. The sequence is that of Cytochrome b (MT-CYB) from Gallus lafayettii (Sri Lanka junglefowl).